A 975-amino-acid chain; its full sequence is MKLEHPDRLMNRTPLSLAALETHDAFAERHIGPDAASQQAMLDTLGFASRAALIDAVIPASIRRAETLPLGPFAQPKSEAEALAALRALADKNQVFRSYIGQGYHDTHTPAVILRNVLENPAWYTAYTPYQPEISQGRLEALLNFQQMVADLTGLAISNASLLDEATAAAEAMTLLQRTGKPKSNVFYVADDVLPQTLEVIRTRALPIGIEVKTGPAADAAQANAFGVLLQYPGVNGDVRDYRALTDAIHAAGGHVVVAADLLALTVLTPPGEWGADVAIGNTQRFGVPMGFGGPHAAYLAVRDEFKRQMPGRLVGVTVDAQGKPALRLALQTREQHIRREKATSNVCTAQALLAIMASMYAVYHGPHGLKTIALRVNRIAALLAAGVKQLGFATVNDTFFDTLTIDTGARTAQVHEFAKAKRINLRRVSDTQVGVSVDETTTRDDLADLLDVFAQAAGGTAPAVDALDAGLAGVAALPAGLERTSAYLTHHVFNRHHSETEMLRYLRSLSDKDLALDRSMIPLGSCTMKLNATSEMLPVTWPEFGGIHPFAPAEQTVGYREMIDQLEQMLVAATGYAAVSLQPNAGSQGEYAGLLIIHAYHASRGEGHRDVCLIPASAHGTNPASAHMAGMKVVVVACDAQGNVDIADLKAKAEQHSANLAAIMITYPSTHGVFEQNVREICEIVHAHGGQVYVDGANMNAMVGLTAPGQFGGDVSHLNLHKTFCIPHGGGGPGVGPVAVGAHLAKFLPNQRSTGYARAEDGIGAVSAAPYGSASILPISWMYIAMMGAKNLTAATETAILNANYIAKRLAPHYPVLYSGPGGLVAHECILDLRPIKESSGISVDDVAKRLMDYGFHAPTMSFPVPGTLMVEPTESESQEELDRFIAAMIAIREEIRAVEEGRADREDNPLRHAPHTAAVVTANEWPHAYSREQAAYPVASLGTNKYWPPVGRADNAYGDRNLFCSCVPMSDYA.

N6-(pyridoxal phosphate)lysine is present on lysine 723.

This sequence belongs to the GcvP family. As to quaternary structure, the glycine cleavage system is composed of four proteins: P, T, L and H. Requires pyridoxal 5'-phosphate as cofactor.

It carries out the reaction N(6)-[(R)-lipoyl]-L-lysyl-[glycine-cleavage complex H protein] + glycine + H(+) = N(6)-[(R)-S(8)-aminomethyldihydrolipoyl]-L-lysyl-[glycine-cleavage complex H protein] + CO2. Its function is as follows. The glycine cleavage system catalyzes the degradation of glycine. The P protein binds the alpha-amino group of glycine through its pyridoxal phosphate cofactor; CO(2) is released and the remaining methylamine moiety is then transferred to the lipoamide cofactor of the H protein. The chain is Glycine dehydrogenase (decarboxylating) from Burkholderia orbicola (strain MC0-3).